The sequence spans 295 residues: Nuclear transcription factor Y subunit A-2 (295 aa).

The Subunit association domain (SAD) motif lies at 139–165; sequence YVNSKQYHGIIRRRQSRAKAAAVLDQK. The NFYA/HAP2-type DNA-binding region spans 173–198; the sequence is KPYMHHSRHLHALRRPRGSGGRFLNT. Basic residues predominate over residues 178-189; it reads HSRHLHALRRPR. The segment at 178 to 244 is disordered; it reads HSRHLHALRR…VVHPENGTMN (67 aa). The segment covering 197–209 has biased composition (polar residues); that stretch reads NTKSQNLENSGTN. Residues 216–233 show a composition bias toward low complexity; sequence SMQIQSQPKPQQSNSQNS.

It belongs to the NFYA/HAP2 subunit family. As to quaternary structure, heterotrimeric transcription factor composed of three components, NF-YA, NF-YB and NF-YC. NF-YB and NF-YC must interact and dimerize for NF-YA association and DNA binding. Component of a heat stress-inducible transcriptional complex with NF-YA and NF-YB subunits made, at least, of NFYA2, NFYB3 and DPB3-1 in cooperation with DREB2A. In terms of tissue distribution, ubiquitous. Expressed in seedlings, roots, petioles, hypocotyls, reproductive organ tissues and leaves.

It is found in the nucleus. In terms of biological role, stimulates the transcription of various genes by recognizing and binding to a CCAAT motif in promoters. Promotes the expression of heat stress-inducible genes by contributing to the formation of a heat stress-specific transcriptional complex with NF-Y subunits (e.g. DPB3-1, NF-YA2 and NF-YB3) and DREB2A at the promoter of target genes, thus promoting heat tolerance. This Arabidopsis thaliana (Mouse-ear cress) protein is Nuclear transcription factor Y subunit A-2.